Reading from the N-terminus, the 1066-residue chain is MNHDFQALALESRGMGELLPTKKFWEPDDSTKDGQKGIFLGDDEWRETAWGASHHSMSQPIMVQRRSGQGFHGNSEVNAILSPRSESGGLGVSMVEYVLSSSPADKLDSRFRKGNFGTRDAETDGPEKGDQKGKASPFEEDQNRDLKQGDDDDSKINGRGLPNGMDADCKDFNRTPGSRQASPTEVVERLGPNTNPSEGLGPLPNPTANKPLVEEFSNPETQNLDAMEQVGLESLQFDYPGNQVPMDSSGATVGLFDYNSQQQLFQRTNALTVQQLTAAQQQQYALAAAQQPHIAGVFSAGLAPAAFVPNPYIISAAPPGTDPYTAAGLAAAATLAGPAVVPPQYYGVPWGVYPANLFQQQAAAAANNTASQQAASQAQPGQQQVLRAGAGQRPLTPNQGQQGQQAESLAAAAAANPTLAFGQGLATGMPGYQVLAPTAYYDQTGALVVGPGARTGLGAPVRLMAPTPVLISSAAAQAAAAAAAGGTASSLTGSTNGLFRPIGTQPPQQQQQQPSTNLQSNSFYGSSSLTNSSQSSSLFSHGPGQPGSTSLGFGSGNSLGAAIGSALSGFGSSVGSSASSSATRRESLSTSSDLYKRSSSSLAPIGQPFYNSLGFSSSPSPIGMPLPSQTPGHSLTPPPSLSSHGSSSSLHLGGLTNGSGRYISAAPGAEAKYRSASSTSSLFSSSSQLFPPSRLRYNRSDIMPSGRSRLLEDFRNNRFPNLQLRDLIGHIVEFSQDQHGSRFIQQKLERATPAERQMVFNEILQAAYQLMTDVFGNYVIQKFFEFGSLDQKLALATRIRGHVLPLALQMYGCRVIQKALESISSDQQVISEMVKELDGHVLKCVKDQNGNHVVQKCIECVQPQSLQFIIDAFKGQVFVLSTHPYGCRVIQRILEHCTAEQTLPILEELHQHTEQLVQDQYGNYVIQHVLEHGRPEDKSKIVSEIRGKVLALSQHKFASNVVEKCVTHASRAERALLIDEVCCQNDGPHSALYTMMKDQYANYVVQKMIDMAEPAQRKIIMHKIRPHITTLRKYTYGKHILAKLEKYYLKNSPDLGPIGGPPNGML.

Residues 1–260 are interaction with SNAPIN; that stretch reads MNHDFQALAL…ATVGLFDYNS (260 aa). Residues Ser67, Ser82, and Ser102 each carry the phosphoserine modification. Positions 106-204 are disordered; it reads KLDSRFRKGN…NPSEGLGPLP (99 aa). Residues 119–133 show a composition bias toward basic and acidic residues; that stretch reads RDAETDGPEKGDQKG. Residues Ser136, Ser178, and Ser182 each carry the phosphoserine modification. Thr184 and Thr396 each carry phosphothreonine. Positions 494 to 553 are disordered; that stretch reads STNGLFRPIGTQPPQQQQQQPSTNLQSNSFYGSSSLTNSSQSSSLFSHGPGQPGSTSLGF. A compositionally biased stretch (low complexity) spans 505-514; sequence QPPQQQQQQP. Residues 515–525 show a composition bias toward polar residues; that stretch reads STNLQSNSFYG. Residues 526–540 show a composition bias toward low complexity; the sequence is SSSLTNSSQSSSLFS. 2 positions are modified to phosphoserine: Ser587 and Ser592. Residues 620-650 are disordered; that stretch reads SPIGMPLPSQTPGHSLTPPPSLSSHGSSSSL. Residues 630 to 650 show a composition bias toward low complexity; the sequence is TPGHSLTPPPSLSSHGSSSSL. Arg674 carries the post-translational modification Omega-N-methylarginine. A phosphoserine mark is found at Ser684 and Ser700. The PUM-HD domain maps to 706–1048; the sequence is GRSRLLEDFR…HILAKLEKYY (343 aa). Pumilio repeat units lie at residues 726-761, 762-797, 798-835, 836-871, 872-907, 908-943, 944-979, and 983-1022; these read DLIG…MVFN, EILQ…ALAT, RIRG…EMVK, ELDG…FIID, AFKG…PILE, ELHQ…KIVS, EIRG…LLID, and CQND…IIMH. An adenine-nucleotide binding in RNA target region spans residues 741 to 745; that stretch reads SRFIQ. A uracil-nucleotide binding in RNA target region spans residues 777–781; it reads NYVIQ. The adenine-nucleotide binding in RNA target stretch occupies residues 813-817; the sequence is CRVIQ. A non-specific-nucleotide binding in RNA target region spans residues 851 to 855; sequence NHVVQ. The interval 887–891 is adenine-nucleotide binding in RNA target; that stretch reads CRVIQ. The segment at 923 to 927 is uracil-nucleotide binding in RNA target; sequence NYVIQ. Positions 959-963 are guanine-nucleotide binding in RNA target; sequence SNVVE. Residues 1002-1006 are uracil-nucleotide binding in RNA target; the sequence is NYVVQ.

Homodimer; homodimerizes in vitro. Interacts with DAZ1, DAZL and NANOS1 via its pumilio repeats. Interacts with NANOS3. Interacts with SNAPIN. Recruits the CCR4-POP2-NOT deadenylase leading to translational inhibition and mRNA degradation. Interacts with DDX20. In case of viral infection, interacts with DHX58. Interacts with TRIM71 (via NHL repeats) in an RNA-dependent manner. In terms of tissue distribution, expressed in male germ cells of adult testis (at protein level). Highly expressed in testis and ovary. Predominantly expressed in stem cells and germ cells. Expressed at lower level in brain, heart, kidney, liver, muscle, placenta, intestine and stomach Expressed in cerebellum, corpus callosum, caudate nucleus, hippocampus, medulla oblongata and putamen. Expressed in all fetal tissues tested.

The protein localises to the cytoplasm. Its subcellular location is the cytoplasmic granule. The protein resides in the perinuclear region. In terms of biological role, sequence-specific RNA-binding protein that acts as a post-transcriptional repressor by binding the 3'-UTR of mRNA targets. Binds to an RNA consensus sequence, the Pumilio Response Element (PRE), 5'-UGUANAUA-3', that is related to the Nanos Response Element (NRE) (, PubMed:21397187). Mediates post-transcriptional repression of transcripts via different mechanisms: acts via direct recruitment of the CCR4-POP2-NOT deadenylase leading to translational inhibition and mRNA degradation. Also mediates deadenylation-independent repression by promoting accessibility of miRNAs. Acts as a post-transcriptional repressor of E2F3 mRNAs by binding to its 3'-UTR and facilitating miRNA regulation. Plays a role in cytoplasmic sensing of viral infection. Represses a program of genes necessary to maintain genomic stability such as key mitotic, DNA repair and DNA replication factors. Its ability to repress those target mRNAs is regulated by the lncRNA NORAD (non-coding RNA activated by DNA damage) which, due to its high abundance and multitude of PUMILIO binding sites, is able to sequester a significant fraction of PUM1 and PUM2 in the cytoplasm. May regulate DCUN1D3 mRNA levels. May support proliferation and self-renewal of stem cells. Binds specifically to miRNA MIR199A precursor, with PUM1, regulates miRNA MIR199A expression at a postranscriptional level. The sequence is that of Pumilio homolog 2 (PUM2) from Homo sapiens (Human).